The sequence spans 460 residues: MGKEKLHVNVVVIGHVDSGKSTTTGHLIYKCGGIDKRTIEKFEKEAAELGKGSFKYAWVLDKLKAERERGITIDIALWKFETPKYMVTVIDAPGHRDFIKNMITGTSQADCAILTIAGGTGEFEAGISKDGQTREHALLAFTLGVRQLIVAVNKMDTTKWSEDRFNEIVKETSTFIKKVGYNPKTVAFVPISGWHGDNMLEESTNMPWYKGWTKETKAGVVKGKTLLDAIDAIEPPVRPSDKPLRLPLQDVYKIGGIGTVPVGRVETGIIKAGMVVTFAPSNVTTEVKSVEMHHEQLAEGKPGDNVGFNVKNVSVKDIRRGNVASDSKNDPAKEAASFNAQVIVLNHPGQIGAGYAPVLDCHTAHIACKFAELLEKIDRRTGKSLEASPKFVKSGDACIVKLVPSKPMCVESYNEYPPLGRFAVRDMRQTVAVGIIKSVDKTDKSGGKVTKSAEKAAKKK.

Position 2 is a n,N,N-trimethylglycine (glycine 2). The residue at position 3 (lysine 3) is an N6,N6-dimethyllysine; alternate. N6-methyllysine; alternate is present on lysine 3. In terms of domain architecture, tr-type G spans lysine 5–serine 240. The segment at glycine 14–serine 21 is G1. Glycine 14–serine 21 lines the GTP pocket. Lysine 30 carries the N6-methyllysine modification. The G2 stretch occupies residues glycine 70 to aspartate 74. At lysine 79 the chain carries N6,N6,N6-trimethyllysine. Residues aspartate 91–glycine 94 are G3. Residues aspartate 91–histidine 95 and asparagine 153–aspartate 156 contribute to the GTP site. Residues asparagine 153–aspartate 156 form a G4 region. The interval serine 192–tryptophan 194 is G5. An N6,N6-dimethyllysine; alternate modification is found at lysine 316. Lysine 316 carries the post-translational modification N6-methyllysine; alternate. Residue lysine 390 is modified to N6-methyllysine.

This sequence belongs to the TRAFAC class translation factor GTPase superfamily. Classic translation factor GTPase family. EF-Tu/EF-1A subfamily.

The protein resides in the cytoplasm. Functionally, this protein promotes the GTP-dependent binding of aminoacyl-tRNA to the A-site of ribosomes during protein biosynthesis. In Schizophyllum commune (Split gill fungus), this protein is Elongation factor 1-alpha (TEF1).